Reading from the N-terminus, the 73-residue chain is Translation initiation factor IF-1 (73 aa).

Positions 1–72 (MAKEDAIEVE…NRGRITYRSK (72 aa)) constitute an S1-like domain.

It belongs to the IF-1 family. In terms of assembly, component of the 30S ribosomal translation pre-initiation complex which assembles on the 30S ribosome in the order IF-2 and IF-3, IF-1 and N-formylmethionyl-tRNA(fMet); mRNA recruitment can occur at any time during PIC assembly.

The protein resides in the cytoplasm. In terms of biological role, one of the essential components for the initiation of protein synthesis. Stabilizes the binding of IF-2 and IF-3 on the 30S subunit to which N-formylmethionyl-tRNA(fMet) subsequently binds. Helps modulate mRNA selection, yielding the 30S pre-initiation complex (PIC). Upon addition of the 50S ribosomal subunit IF-1, IF-2 and IF-3 are released leaving the mature 70S translation initiation complex. This is Translation initiation factor IF-1 from Syntrophobacter fumaroxidans (strain DSM 10017 / MPOB).